Here is a 298-residue protein sequence, read N- to C-terminus: Tyrosine recombinase XerC (298 aa).

Residues 1 to 84 enclose the Core-binding (CB) domain; that stretch reads MNHIQEAFLN…TLRTFYEYWM (84 aa). The Tyr recombinase domain maps to 105-286; the sequence is YLPQFFYEEE…SNQQLRKVYL (182 aa). Residues Arg145, Lys169, His238, Arg241, and His264 contribute to the active site. The active-site O-(3'-phospho-DNA)-tyrosine intermediate is Tyr273.

This sequence belongs to the 'phage' integrase family. XerC subfamily. In terms of assembly, forms a cyclic heterotetrameric complex composed of two molecules of XerC and two molecules of XerD.

The protein resides in the cytoplasm. Its function is as follows. Site-specific tyrosine recombinase, which acts by catalyzing the cutting and rejoining of the recombining DNA molecules. The XerC-XerD complex is essential to convert dimers of the bacterial chromosome into monomers to permit their segregation at cell division. It also contributes to the segregational stability of plasmids. This Staphylococcus aureus (strain MSSA476) protein is Tyrosine recombinase XerC.